The sequence spans 81 residues: Photosystem I iron-sulfur center (81 aa).

2 consecutive 4Fe-4S ferredoxin-type domains span residues 2–31 (SHSV…MVPW) and 39–68 (IASS…IRVY). Residues Cys11, Cys14, Cys17, Cys21, Cys48, Cys51, Cys54, and Cys58 each contribute to the [4Fe-4S] cluster site.

In terms of assembly, the G.violaceus PSI reaction center is composed of one copy each of PsaA,B,C,D,E,F,L,M and Z, and forms trimeric complexes. [4Fe-4S] cluster is required as a cofactor.

Its subcellular location is the cell inner membrane. It catalyses the reaction reduced [plastocyanin] + hnu + oxidized [2Fe-2S]-[ferredoxin] = oxidized [plastocyanin] + reduced [2Fe-2S]-[ferredoxin]. In terms of biological role, apoprotein for the two 4Fe-4S centers FA and FB of photosystem I (PSI); essential for photochemical activity. FB is the terminal electron acceptor of PSI, donating electrons to ferredoxin. The C-terminus interacts with PsaA/B/D and helps assemble the protein into the PSI complex. Required for binding of PsaD and PsaE to PSI. PSI is a plastocyanin/cytochrome c6-ferredoxin oxidoreductase, converting photonic excitation into a charge separation, which transfers an electron from the donor P700 chlorophyll pair to the spectroscopically characterized acceptors A0, A1, FX, FA and FB in turn. The polypeptide is Photosystem I iron-sulfur center (Gloeobacter violaceus (strain ATCC 29082 / PCC 7421)).